Consider the following 204-residue polypeptide: LexA repressor (204 aa).

Positions 29–49 (RAEIADIMGFQSKNAASDHLR) form a DNA-binding region, H-T-H motif. Catalysis depends on for autocatalytic cleavage activity residues S123 and K160.

This sequence belongs to the peptidase S24 family. As to quaternary structure, homodimer.

The enzyme catalyses Hydrolysis of Ala-|-Gly bond in repressor LexA.. Represses a number of genes involved in the response to DNA damage (SOS response), including recA and lexA. In the presence of single-stranded DNA, RecA interacts with LexA causing an autocatalytic cleavage which disrupts the DNA-binding part of LexA, leading to derepression of the SOS regulon and eventually DNA repair. This chain is LexA repressor, found in Alcanivorax borkumensis (strain ATCC 700651 / DSM 11573 / NCIMB 13689 / SK2).